A 2278-amino-acid polypeptide reads, in one-letter code: Protein Ycf2 (2278 aa).

ATP is bound at residue 1632–1639; the sequence is GSIGTGRS.

It belongs to the Ycf2 family.

The protein resides in the plastid. It localises to the chloroplast stroma. Probable ATPase of unknown function. Its presence in a non-photosynthetic plant (Epifagus virginiana) and experiments in tobacco indicate that it has an essential function which is probably not related to photosynthesis. The protein is Protein Ycf2 of Solanum tuberosum (Potato).